A 119-amino-acid polypeptide reads, in one-letter code: Large ribosomal subunit protein bL20 (119 aa).

Belongs to the bacterial ribosomal protein bL20 family.

Its function is as follows. Binds directly to 23S ribosomal RNA and is necessary for the in vitro assembly process of the 50S ribosomal subunit. It is not involved in the protein synthesizing functions of that subunit. This chain is Large ribosomal subunit protein bL20, found in Teredinibacter turnerae (strain ATCC 39867 / T7901).